We begin with the raw amino-acid sequence, 381 residues long: Cytochrome b (381 aa).

The next 4 membrane-spanning stretches (helical) occupy residues 34–54 (FGSL…FLAM), 78–99 (WLIR…YLHI), 114–134 (WNTG…GYVL), and 179–199 (FFTF…VHLL). 2 residues coordinate heme b: H84 and H98. Heme b is bound by residues H183 and H197. H202 lines the a ubiquinone pocket. A run of 4 helical transmembrane segments spans residues 227 to 247 (YKDL…TLFS), 289 to 309 (LGGV…PTLH), 321 to 341 (LTQI…WIGG), and 348 to 368 (FIII…LLMP).

It belongs to the cytochrome b family. As to quaternary structure, the cytochrome bc1 complex contains 3 respiratory subunits (MT-CYB, CYC1 and UQCRFS1), 2 core proteins (UQCRC1 and UQCRC2) and probably 6 low-molecular weight proteins. Requires heme b as cofactor.

It is found in the mitochondrion inner membrane. Its function is as follows. Component of the ubiquinol-cytochrome c reductase complex (complex III or cytochrome b-c1 complex) that is part of the mitochondrial respiratory chain. The b-c1 complex mediates electron transfer from ubiquinol to cytochrome c. Contributes to the generation of a proton gradient across the mitochondrial membrane that is then used for ATP synthesis. This is Cytochrome b (MT-CYB) from Chelonia mydas (Green sea-turtle).